The primary structure comprises 234 residues: Ubiquinone biosynthesis O-methyltransferase (234 aa).

S-adenosyl-L-methionine-binding residues include arginine 40, glycine 59, aspartate 80, and methionine 123.

It belongs to the methyltransferase superfamily. UbiG/COQ3 family.

The enzyme catalyses a 3-demethylubiquinol + S-adenosyl-L-methionine = a ubiquinol + S-adenosyl-L-homocysteine + H(+). The catalysed reaction is a 3-(all-trans-polyprenyl)benzene-1,2-diol + S-adenosyl-L-methionine = a 2-methoxy-6-(all-trans-polyprenyl)phenol + S-adenosyl-L-homocysteine + H(+). The protein operates within cofactor biosynthesis; ubiquinone biosynthesis. In terms of biological role, O-methyltransferase that catalyzes the 2 O-methylation steps in the ubiquinone biosynthetic pathway. The chain is Ubiquinone biosynthesis O-methyltransferase from Coxiella burnetii (strain CbuK_Q154) (Coxiella burnetii (strain Q154)).